Consider the following 757-residue polypeptide: MDSLFVEEVAASLVREFLSRKGLKKTCVTMDQERPRSDLSINNRNDLRKVLHLEFLYKENKAKENPLKTSLELITRYFLDHFGNTANNFTQDTPIPALSVPKKNNKVPSRCSETTLVNIYDLSDEDAGWRTSLSETSKARHDNLDGDVLGNFVSSKRPPHKSKPMQTVPGETPVLTSAWEKIDKLHSEPSLDVKRMGENSRPKSGLIVRGMMSGPIASSPQDSFHRHYLRRSSPSSSSTQPQEESRKVPELFVCTQQDILASSNSSPSRTSLGQLSELTVERQKTTASSPPHLPSKRLPPWDRARPRDPSEDTPAVDGSTDTDRMPLKLYLPGGNSRMTQERLERAFKRQGSQPAPVRKNQLLPSDKVDGELGALRLEDVEDELIREEVILSPVPSVLKLQTASKPIDLSVAKEIKTLLFGSSFCCFNEEWKLQSFSFSNTASLKYGIVQNKGGPCGVLAAVQGCVLQKLLFEGDSKADCAQGLQPSDAHRTRCLVLALADIVWRAGGRERAVVALASRTQQFSPTGKYKADGVLETLTLHSLTCYEDLVTFLQQSIHQFEVGPYGCILLTLSAILSRSTELIRQDFDVPTSHLIGAHGYCTQELVNLLLTGKAVSNVFNDVVELDSGDGNITLLRGIAARSDIGFLSLFEHYNMCQVGCFLKTPRFPIWVVCSESHFSILFSLQPGLLRDWRTERLFDLYYYDGLANQQEQIRLTIDTTQTISEDTDNDLVPPLELCIRTKWKGASVNWNGSDPIL.

Disordered regions lie at residues 152 to 173 (FVSS…GETP) and 190 to 334 (SLDV…LPGG). Positions 190-201 (SLDVKRMGENSR) are enriched in basic and acidic residues. Residues Ser-219 and Ser-223 each carry the phosphoserine modification. Residues 232 to 242 (SSPSSSSTQPQ) are compositionally biased toward low complexity. A compositionally biased stretch (polar residues) spans 254 to 277 (CTQQDILASSNSSPSRTSLGQLSE). At Ser-289 the chain carries Phosphoserine. Positions 299 to 310 (PPWDRARPRDPS) are enriched in basic and acidic residues. Catalysis depends on Cys-456, which acts as the Nucleophile. His-677 serves as the catalytic Proton acceptor.

Belongs to the MINDY deubiquitinase family. FAM188 subfamily.

It catalyses the reaction Thiol-dependent hydrolysis of ester, thioester, amide, peptide and isopeptide bonds formed by the C-terminal Gly of ubiquitin (a 76-residue protein attached to proteins as an intracellular targeting signal).. Functionally, probable hydrolase that can remove 'Lys-48'-linked conjugated ubiquitin from proteins. In Homo sapiens (Human), this protein is Probable ubiquitin carboxyl-terminal hydrolase MINDY-4.